The following is a 27-amino-acid chain: Conotoxin as14a (27 aa).

Disulfide bonds link C6-C26 and C10-C22.

This sequence belongs to the conotoxin L superfamily. As to expression, expressed by the venom duct.

The protein resides in the secreted. Its function is as follows. In vivo, intracranial injection, elicits scratching and grooming activity in mice. This is Conotoxin as14a from Conus cancellatus (Cancellate cone).